A 139-amino-acid chain; its full sequence is Transcription antitermination protein NusB (139 aa).

The protein belongs to the NusB family.

Its function is as follows. Involved in transcription antitermination. Required for transcription of ribosomal RNA (rRNA) genes. Binds specifically to the boxA antiterminator sequence of the ribosomal RNA (rrn) operons. The polypeptide is Transcription antitermination protein NusB (Cronobacter sakazakii (strain ATCC BAA-894) (Enterobacter sakazakii)).